The primary structure comprises 111 residues: Ribonuclease P protein component (111 aa).

It belongs to the RnpA family. In terms of assembly, consists of a catalytic RNA component (M1 or rnpB) and a protein subunit.

The catalysed reaction is Endonucleolytic cleavage of RNA, removing 5'-extranucleotides from tRNA precursor.. In terms of biological role, RNaseP catalyzes the removal of the 5'-leader sequence from pre-tRNA to produce the mature 5'-terminus. It can also cleave other RNA substrates such as 4.5S RNA. The protein component plays an auxiliary but essential role in vivo by binding to the 5'-leader sequence and broadening the substrate specificity of the ribozyme. In Clostridium botulinum (strain Okra / Type B1), this protein is Ribonuclease P protein component.